Reading from the N-terminus, the 215-residue chain is Ribonuclease T (215 aa).

One can recognise an Exonuclease domain in the interval 20-194 (VVIDVETAGF…YDTLQTAKLF (175 aa)). Positions 23, 25, 181, and 186 each coordinate Mg(2+). The active-site Proton donor/acceptor is His181.

It belongs to the RNase T family. In terms of assembly, homodimer. The cofactor is Mg(2+).

Its function is as follows. Trims short 3' overhangs of a variety of RNA species, leaving a one or two nucleotide 3' overhang. Responsible for the end-turnover of tRNA: specifically removes the terminal AMP residue from uncharged tRNA (tRNA-C-C-A). Also appears to be involved in tRNA biosynthesis. In Yersinia pseudotuberculosis serotype O:1b (strain IP 31758), this protein is Ribonuclease T.